A 571-amino-acid chain; its full sequence is Streptolysin O (571 aa).

A signal peptide spans Met-1–Ser-33. 2 disordered regions span residues Glu-32–Glu-56 and Lys-81–Glu-108. A compositionally biased stretch (low complexity) spans Asn-37–Glu-48. The next 4 membrane-spanning stretches (beta stranded) occupy residues Lys-260–Ile-273, Ile-280–Glu-289, Ser-358–Ala-367, and Lys-375–Ser-387. The Conserved undecapeptide signature appears at Glu-529–Arg-539. Thr-561 is a short sequence motif (cholesterol binding).

The protein belongs to the cholesterol-dependent cytolysin family. In terms of assembly, homooligomeric pore complex of 35 to 50 subunits; when inserted in the host membrane.

Its subcellular location is the secreted. It is found in the host cell membrane. Functionally, a cholesterol-dependent toxin that causes cytolysis by forming pores in cholesterol containing host membranes. After binding to target membranes, the protein undergoes a major conformation change, leading to its insertion in the host membrane and formation of an oligomeric pore complex. Cholesterol is required for binding to host membranes, membrane insertion and pore formation; cholesterol binding is mediated by a Thr-Leu pair in the C-terminus. Can be reversibly inactivated by oxidation. In Streptococcus pyogenes serotype M6 (strain ATCC BAA-946 / MGAS10394), this protein is Streptolysin O (slo).